We begin with the raw amino-acid sequence, 482 residues long: Probable polyamine transporter At1g31820 (482 aa).

A run of 11 helical transmembrane segments spans residues 36 to 56 (VSMLPLVFLIFYEVSGGPFGA), 66 to 86 (LLALLGFVIFPFIWCIPEALI), 94 to 114 (FPINGGFVVWVSSALGTFWGF), 143 to 163 (VPALATGLPRVASILILTLLL), 171 to 191 (LTIVGWTAVFMGVFSMLPFAV), 254 to 274 (VIFVALSNFLPLLSGTGAIPL), 294 to 314 (GWLQLWVQAAAATSNMGMFLA), 344 to 364 (TPLLGILFSASGVLLLSGLSF), 367 to 387 (IIAAENLLYCGGMILEFIAFV), 406 to 426 (TVGSILICVPPIVLICLVIVL), and 429 to 449 (IKVALVSFVMVVIGFLMKPCL).

The protein belongs to the amino acid-polyamine-organocation (APC) superfamily. Polyamine:cation symporter (PHS) (TC 2.A.3.12) family.

The protein resides in the cell membrane. Probable cell membrane polyamine/proton symporter involved in the polyamine uptake in cells. This chain is Probable polyamine transporter At1g31820, found in Arabidopsis thaliana (Mouse-ear cress).